We begin with the raw amino-acid sequence, 732 residues long: Catalase-peroxidase (732 aa).

Residues 96–219 (WHSAGTYRIG…LGAVQMGLIY (124 aa)) constitute a cross-link (tryptophyl-tyrosyl-methioninium (Trp-Tyr) (with M-245)). Histidine 97 (proton acceptor) is an active-site residue. Positions 219 to 245 (YVNPEGPNGHPDPVASGRDIRETFGRM) form a cross-link, tryptophyl-tyrosyl-methioninium (Tyr-Met) (with W-96). Histidine 260 serves as a coordination point for heme b.

This sequence belongs to the peroxidase family. Peroxidase/catalase subfamily. Homodimer or homotetramer. Requires heme b as cofactor. Post-translationally, formation of the three residue Trp-Tyr-Met cross-link is important for the catalase, but not the peroxidase activity of the enzyme.

It carries out the reaction H2O2 + AH2 = A + 2 H2O. The catalysed reaction is 2 H2O2 = O2 + 2 H2O. Functionally, bifunctional enzyme with both catalase and broad-spectrum peroxidase activity. The sequence is that of Catalase-peroxidase from Acaryochloris marina (strain MBIC 11017).